Reading from the N-terminus, the 466-residue chain is Ras-GEF domain-containing family member 1C (466 aa).

Disordered stretches follow at residues 1-35 (MPRT…PLLD) and 443-466 (SESP…LGKT). The 131-residue stretch at 34–164 (LDGAPSSASL…LLQTLHQKLA (131 aa)) folds into the N-terminal Ras-GEF domain. Positions 200-446 (DPYTLAQQLT…YLASYESESP (247 aa)) constitute a Ras-GEF domain.

Functionally, guanine nucleotide exchange factor (GEF). This Mus musculus (Mouse) protein is Ras-GEF domain-containing family member 1C (Rasgef1c).